Reading from the N-terminus, the 1530-residue chain is DNA-directed RNA polymerase III subunit RPC1 (1530 aa).

Zn(2+) contacts are provided by Cys74, Cys77, Cys84, His87, Cys114, Cys117, and Cys161. Positions 503, 505, and 507 each coordinate Mg(2+). Residues 846–858 (PTEFFFHTMAGRE) form a bridging helix region. Residues 992–1001 (EEQESREDAL) are compositionally biased toward basic and acidic residues. 2 disordered regions span residues 992 to 1016 (EEQE…SRPR) and 1057 to 1099 (NLLN…SKEG).

Belongs to the RNA polymerase beta' chain family. Component of the RNA polymerase III (Pol III) complex consisting of 17 subunits.

Its subcellular location is the nucleus. It catalyses the reaction RNA(n) + a ribonucleoside 5'-triphosphate = RNA(n+1) + diphosphate. Functionally, DNA-dependent RNA polymerase catalyzes the transcription of DNA into RNA using the four ribonucleoside triphosphates as substrates. Largest and catalytic core component of RNA polymerase III which synthesizes small RNAs, such as 5S rRNA and tRNAs. Forms the polymerase active center together with the second largest subunit. A single-stranded DNA template strand of the promoter is positioned within the central active site cleft of Pol III. A bridging helix emanates from RPC1 and crosses the cleft near the catalytic site and is thought to promote translocation of Pol III by acting as a ratchet that moves the RNA-DNA hybrid through the active site by switching from straight to bent conformations at each step of nucleotide addition. This chain is DNA-directed RNA polymerase III subunit RPC1, found in Trypanosoma brucei brucei.